An 85-amino-acid chain; its full sequence is MYSKDVEIIASNGLHTRPAAQFVKEAKAFSSEITVTSGGKSASAKSLFKLQTLALTQGTILTISADGEDEQQAVEHLVALIPTLE.

The region spanning 1–85 is the HPr domain; sequence MYSKDVEIIA…HLVALIPTLE (85 aa). The Pros-phosphohistidine intermediate role is filled by histidine 15.

This sequence belongs to the HPr family.

The protein localises to the cytoplasm. General (non sugar-specific) component of the phosphoenolpyruvate-dependent sugar phosphotransferase system (sugar PTS). This major carbohydrate active-transport system catalyzes the phosphorylation of incoming sugar substrates concomitantly with their translocation across the cell membrane. The phosphoryl group from phosphoenolpyruvate (PEP) is transferred to the phosphoryl carrier protein HPr by enzyme I. Phospho-HPr then transfers it to the PTS EIIA domain. The polypeptide is Phosphocarrier protein HPr (ptsH) (Haemophilus influenzae (strain ATCC 51907 / DSM 11121 / KW20 / Rd)).